The sequence spans 267 residues: Small ribosomal subunit protein uS2 (267 aa).

A disordered region spans residues 232–267 (ATVREEEFADAPAEDAKPARRAPAKKAAADKGEAQA). Positions 258–267 (AAADKGEAQA) are enriched in basic and acidic residues.

The protein belongs to the universal ribosomal protein uS2 family.

This is Small ribosomal subunit protein uS2 from Stenotrophomonas maltophilia (strain R551-3).